Reading from the N-terminus, the 406-residue chain is Lysophospholipid transporter LplT (406 aa).

Helical transmembrane passes span 16-36 (MVAV…LLFA), 53-73 (ILQM…GQIA), 91-111 (AGAL…LVGV), 139-159 (MMEA…GILA), 164-184 (MAAL…NLFI), 227-247 (LFWG…PVAL), 253-273 (ATPT…AGAA), 285-305 (CLPA…QNSM), 310-330 (LLLI…NALL), 349-369 (LGEN…VKLG), and 372-392 (VVAV…LLWG).

The protein belongs to the major facilitator superfamily. LplT (TC 2.A.1.42) family.

The protein localises to the cell inner membrane. In terms of biological role, catalyzes the facilitated diffusion of 2-acyl-glycero-3-phosphoethanolamine (2-acyl-GPE) into the cell. The protein is Lysophospholipid transporter LplT of Yersinia pestis bv. Antiqua (strain Antiqua).